The chain runs to 248 residues: Phycocyanobilin:ferredoxin oxidoreductase (248 aa).

The protein belongs to the HY2 family.

It carries out the reaction (2R,3Z)-phycocyanobilin + 4 oxidized [2Fe-2S]-[ferredoxin] = biliverdin IXalpha + 4 reduced [2Fe-2S]-[ferredoxin] + 4 H(+). Catalyzes the four-electron reduction of biliverdin IX-alpha (2-electron reduction at both the A and D rings); the reaction proceeds via an isolatable 2-electron intermediate, 181,182-dihydrobiliverdin. This chain is Phycocyanobilin:ferredoxin oxidoreductase, found in Synechococcus sp. (strain ATCC 27144 / PCC 6301 / SAUG 1402/1) (Anacystis nidulans).